Reading from the N-terminus, the 530-residue chain is MQEFSLSTLLEMTVGLASGANNEERFHRLLDAVRKAVICDCVVLMSLHNDTLTPLAMQGLTRDTLGRRFVVSEHPRLAQICSADLPVRFAADCPLPDPFDGLLLDSEDDLPMHSCMGLPLHFGEQLLGILTLDSLKPDAFDHLSPRSLEILAAIAAATLKMTLTFSELENQAKQTQLRLEELNQEAWSRDSVEIIGNSGPMLAMKADIDVVAPSQFNILIHGETGVGKELVARTIHQRSNRKRQPLVYVNCAAIPENLLESELFGHVKGAFTGADRARMGKFALADGGTLFLDEIGELPLSAQSKILRALQNHEIQPVGQDRVQTVDVRILAATNRDLKKEVEAGRFRADLYHRLSVYPIYVPPLRERKGDLSLLAGYFVEQARRKLGITQLKLHGDVLSQLIQYPWPGNVRELEHVINRAALKAKARQRGRPVTTLKVEDLGELQGPRAAMVEPTAQDEPMLGEWIGELGLRDATDEFQRHLISETLTQADFNWAEAARRLQTDRANLTRLAKRLGITVSRSHSIERSR.

Residues 194–423 (IIGNSGPMLA…LEHVINRAAL (230 aa)) form the Sigma-54 factor interaction domain. ATP is bound by residues 222 to 229 (GETGVGKE) and 285 to 294 (ADGGTLFLDE).

Involved in the regulation of different processes depending on the cell density. Acts together with sigma-54 to repress, perhaps indirectly, some genes. This chain is Regulatory protein LuxO (luxO), found in Vibrio cholerae serotype O1 (strain ATCC 39541 / Classical Ogawa 395 / O395).